Consider the following 108-residue polypeptide: Ig kappa chain V-V region MOPC 149 (108 aa).

A framework-1 region spans residues 1 to 23 (DIQMTQSPDYLSASVGETVTITC). The cysteines at positions 23 and 88 are disulfide-linked. The tract at residues 24 to 34 (RASENIYSYLA) is complementarity-determining-1. Residues 35–49 (WYQQKQGKSPQLLVY) form a framework-2 region. Residues 50–56 (DAKTLVE) are complementarity-determining-2. The framework-3 stretch occupies residues 57-88 (GVPSRFSGSGSGTQFSLKINSLQPEDFGSYYC). Residues 89–97 (QHHYGIPFT) form a complementarity-determining-3 region. Residues 98 to 108 (FGSGTKLEIKR) are framework-4.

The protein is Ig kappa chain V-V region MOPC 149 of Mus musculus (Mouse).